The primary structure comprises 197 residues: Large ribosomal subunit protein bL25 (197 aa).

It belongs to the bacterial ribosomal protein bL25 family. CTC subfamily. In terms of assembly, part of the 50S ribosomal subunit; part of the 5S rRNA/L5/L18/L25 subcomplex. Contacts the 5S rRNA. Binds to the 5S rRNA independently of L5 and L18.

In terms of biological role, this is one of the proteins that binds to the 5S RNA in the ribosome where it forms part of the central protuberance. This chain is Large ribosomal subunit protein bL25, found in Lawsonia intracellularis (strain PHE/MN1-00).